We begin with the raw amino-acid sequence, 819 residues long: Kinesin-like protein KIN-13A (819 aa).

The segment at 150 to 178 is disordered; sequence EPFEPSPFIPKEMDEDDDDMLPGSQPGPS. Positions 199–535 constitute a Kinesin motor domain; sequence KIKVVVRKRP…LRYADRVKSL (337 aa). Residue 289–296 coordinates ATP; the sequence is GQTGSGKT. A disordered region spans residues 534 to 729; it reads SLSKGSNTRK…QSEKESSCDD (196 aa). Over residues 550–562 the composition is skewed to low complexity; sequence TIPSSKDSSSAPS. Basic and acidic residues-rich tracts occupy residues 577–589 and 614–631; these read QEKRPVETSRKAA and RGKEENGSSGLNDRERVD. The segment covering 632-652 has biased composition (polar residues); sequence LNSSRISYNSKPQSVQSSANL. Over residues 669-686 the composition is skewed to basic and acidic residues; the sequence is YRDDKPERQSNYAKKDSG. The segment covering 697-719 has biased composition (low complexity); the sequence is QQAKQLQQQQRPTSASASQNSSR. The stretch at 736 to 767 forms a coiled coil; sequence LEEEEALIAAHRKEIENTMEIVREEMNLLAEV.

Belongs to the TRAFAC class myosin-kinesin ATPase superfamily. Kinesin family. KIN-13 subfamily. In terms of tissue distribution, ubiquitous.

The protein localises to the microsome. This Oryza sativa subsp. japonica (Rice) protein is Kinesin-like protein KIN-13A.